Reading from the N-terminus, the 489-residue chain is uncharacterized protein (489 aa).

13 consecutive transmembrane segments (helical) span residues 1–21 (MNAA…LGIR), 40–60 (FGTV…FTFL), 74–94 (FYII…LPAV), 117–137 (PLLG…YLVL), 158–178 (AAIW…GIHG), 188–208 (IMIL…YYGG), 234–254 (AWFS…PHTF), 271–291 (IIMP…FAAI), 318–338 (FVGI…SMIL), 362–382 (VSAL…YFTF), 388–408 (IVTL…ALLF), 422–442 (FAGI…ETTI), and 456–476 (LNVG…VSLM).

It belongs to the sodium:solute symporter (SSF) (TC 2.A.21) family.

The protein resides in the cell membrane. This is an uncharacterized protein from Bacillus subtilis (strain 168).